The chain runs to 315 residues: 4-hydroxy-3-methylbut-2-enyl diphosphate reductase (315 aa).

Cys-12 is a [4Fe-4S] cluster binding site. His-41 and His-74 together coordinate (2E)-4-hydroxy-3-methylbut-2-enyl diphosphate. His-41 and His-74 together coordinate dimethylallyl diphosphate. 2 residues coordinate isopentenyl diphosphate: His-41 and His-74. Residue Cys-96 participates in [4Fe-4S] cluster binding. His-124 is a (2E)-4-hydroxy-3-methylbut-2-enyl diphosphate binding site. Position 124 (His-124) interacts with dimethylallyl diphosphate. Residue His-124 coordinates isopentenyl diphosphate. The Proton donor role is filled by Glu-126. (2E)-4-hydroxy-3-methylbut-2-enyl diphosphate is bound at residue Thr-168. Position 198 (Cys-198) interacts with [4Fe-4S] cluster. (2E)-4-hydroxy-3-methylbut-2-enyl diphosphate is bound by residues Ser-226, Ser-227, Asn-228, and Ser-270. The dimethylallyl diphosphate site is built by Ser-226, Ser-227, Asn-228, and Ser-270. Residues Ser-226, Ser-227, Asn-228, and Ser-270 each coordinate isopentenyl diphosphate.

This sequence belongs to the IspH family. The cofactor is [4Fe-4S] cluster.

It carries out the reaction isopentenyl diphosphate + 2 oxidized [2Fe-2S]-[ferredoxin] + H2O = (2E)-4-hydroxy-3-methylbut-2-enyl diphosphate + 2 reduced [2Fe-2S]-[ferredoxin] + 2 H(+). The catalysed reaction is dimethylallyl diphosphate + 2 oxidized [2Fe-2S]-[ferredoxin] + H2O = (2E)-4-hydroxy-3-methylbut-2-enyl diphosphate + 2 reduced [2Fe-2S]-[ferredoxin] + 2 H(+). It participates in isoprenoid biosynthesis; dimethylallyl diphosphate biosynthesis; dimethylallyl diphosphate from (2E)-4-hydroxy-3-methylbutenyl diphosphate: step 1/1. The protein operates within isoprenoid biosynthesis; isopentenyl diphosphate biosynthesis via DXP pathway; isopentenyl diphosphate from 1-deoxy-D-xylulose 5-phosphate: step 6/6. Functionally, catalyzes the conversion of 1-hydroxy-2-methyl-2-(E)-butenyl 4-diphosphate (HMBPP) into a mixture of isopentenyl diphosphate (IPP) and dimethylallyl diphosphate (DMAPP). Acts in the terminal step of the DOXP/MEP pathway for isoprenoid precursor biosynthesis. The sequence is that of 4-hydroxy-3-methylbut-2-enyl diphosphate reductase from Pseudomonas fluorescens (strain SBW25).